Here is a 1152-residue protein sequence, read N- to C-terminus: Calcium-activated potassium channel subunit alpha-1 (1152 aa).

The tract at residues M1 to E37 is disordered. Residues M1 to M60 lie on the Extracellular side of the membrane. Residues S15–S34 are compositionally biased toward low complexity. The chain crosses the membrane as a helical span at residues W61 to L81. Residues W82–R152 lie on the Cytoplasmic side of the membrane. S-palmitoyl cysteine attachment occurs at residues C92, C93, and C95. The chain crosses the membrane as a helical span at residues V153–S173. The Extracellular portion of the chain corresponds to S174–T188. Residues L189–A209 traverse the membrane as a helical segment. The Cytoplasmic segment spans residues A210 to K213. A helical membrane pass occupies residues L214–V234. Residues S235–L238 are Extracellular-facing. The helical; Voltage-sensor transmembrane segment at N239 to I259 threads the bilayer. The Cytoplasmic segment spans residues L260–L274. The helical transmembrane segment at V275–V295 threads the bilayer. The Extracellular portion of the chain corresponds to E296–Q309. The segment at residues A310–V332 is an intramembrane region (pore-forming). The Selectivity for potassium motif lies at T326–Y329. Topologically, residues Y333 to L341 are extracellular. A helical transmembrane segment spans residues F342–I362. Topologically, residues E363–L1152 are cytoplasmic. The 143-residue stretch at R381–I523 folds into the RCK N-terminal 1 domain. 3 residues coordinate Mg(2+): E413, Q436, and E438. Residues L530–F550 are segment S7. The segment at L587 to I607 is segment S8. A heme-binding motif region spans residues C651–H655. The tract at residues E675–R703 is disordered. Position 679 is a phosphothreonine (T679). A phosphoserine mark is found at S681, S694, and S698. The segment at V753 to L773 is segment S9. An RCK N-terminal 2 domain is found at S755–P899. At T886 the chain carries Phosphothreonine. Residues S894 and S898 each carry the phosphoserine modification. Residues T919–E941 carry the Calcium bowl motif. Ca(2+)-binding residues include Q928, D931, D934, and D936. The tract at residues F948–F968 is segment S10. The span at R1102–S1127 shows a compositional bias: low complexity. A disordered region spans residues R1102–L1152. A compositionally biased stretch (basic and acidic residues) spans K1136–L1152. 2 positions are modified to phosphoserine: S1137 and S1140.

This sequence belongs to the potassium channel family. Calcium-activated (TC 1.A.1.3) subfamily. KCa1.1/KCNMA1 sub-subfamily. Homotetramer; which constitutes the calcium-activated potassium channel. Interacts with beta subunits KCNMB1, KCNMB2, KCNMB3 and KCNMB4. Interacts with gamma subunits LRRC26, LRRC38, LRRC52 and LRRC55. Beta and gamma subunits are accessory, and modulate its activity. Interacts with RAB11B. Phosphorylated. Phosphorylation by kinases such as PKA and/or PKG. In smooth muscles, phosphorylation affects its activity. Post-translationally, palmitoylation by ZDHHC22 and ZDHHC23 within the intracellular linker between the S0 and S1 transmembrane domains regulates localization to the plasma membrane. Depalmitoylated by LYPLA1 and LYPLAL1, leading to retard exit from the trans-Golgi network.

The protein localises to the cell membrane. It catalyses the reaction K(+)(in) = K(+)(out). Ethanol and carbon monoxide-bound heme increase channel activation. Heme inhibits channel activation. In terms of biological role, potassium channel activated by both membrane depolarization or increase in cytosolic Ca(2+) that mediates export of K(+). It is also activated by the concentration of cytosolic Mg(2+). Its activation dampens the excitatory events that elevate the cytosolic Ca(2+) concentration and/or depolarize the cell membrane. It therefore contributes to repolarization of the membrane potential. Plays a key role in controlling excitability in a number of systems, such as regulation of the contraction of smooth muscle, the tuning of hair cells in the cochlea, regulation of transmitter release, and innate immunity. In smooth muscles, its activation by high level of Ca(2+), caused by ryanodine receptors in the sarcoplasmic reticulum, regulates the membrane potential. In cochlea cells, its number and kinetic properties partly determine the characteristic frequency of each hair cell and thereby helps to establish a tonotopic map. Kinetics of KCNMA1 channels are determined by alternative splicing, phosphorylation status and its combination with modulating beta subunits. Highly sensitive to both iberiotoxin (IbTx) and charybdotoxin (CTX). The polypeptide is Calcium-activated potassium channel subunit alpha-1 (KCNMA1) (Sus scrofa (Pig)).